The sequence spans 562 residues: Glutamate--tRNA ligase (562 aa).

The short motif at 90–100 (PNPSGLLHIGH) is the 'HIGH' region element.

The protein belongs to the class-I aminoacyl-tRNA synthetase family. Glutamate--tRNA ligase type 2 subfamily.

The protein localises to the cytoplasm. It catalyses the reaction tRNA(Glu) + L-glutamate + ATP = L-glutamyl-tRNA(Glu) + AMP + diphosphate. Functionally, catalyzes the attachment of glutamate to tRNA(Glu) in a two-step reaction: glutamate is first activated by ATP to form Glu-AMP and then transferred to the acceptor end of tRNA(Glu). In Nanoarchaeum equitans (strain Kin4-M), this protein is Glutamate--tRNA ligase.